A 598-amino-acid chain; its full sequence is Biotin-dependent acyl-coenzyme A carboxylase alpha3 subunit (598 aa).

The Biotin carboxylation domain maps to 8-452 (RIAKVLVANR…SFSVHTRWIE (445 aa)). The 198-residue stretch at 127–324 (RHIAARAQAP…LVLQQFKIAN (198 aa)) folds into the ATP-grasp domain. Residue 155 to 216 (AKEHGVPIAI…ERYLDKPRHV (62 aa)) participates in ATP binding. The Mg(2+) site is built by glutamate 282, glutamate 295, and asparagine 297. Positions 282, 295, and 297 each coordinate Mn(2+). The tract at residues 506 to 531 (PAGVIRKKPKPRKRGGHTGAATSGDA) is disordered. A compositionally biased stretch (basic residues) spans 510-521 (IRKKPKPRKRGG). The 77-residue stretch at 522–598 (HTGAATSGDA…TQGTVLAEIK (77 aa)) folds into the Biotinyl-binding domain. Position 564 is an N6-biotinyllysine (lysine 564).

As to quaternary structure, the biotin-dependent acyl-CoA carboxylase complex is composed of AccA3, which contains the biotin carboxylase (BC) and biotin carboxyl carrier protein (BCCP) domains, and an AccD protein, which contains the carboxyl transferase (CT) domain. It depends on Mg(2+) as a cofactor. Mn(2+) is required as a cofactor. Requires biotin as cofactor.

It catalyses the reaction N(6)-biotinyl-L-lysyl-[protein] + hydrogencarbonate + ATP = N(6)-carboxybiotinyl-L-lysyl-[protein] + ADP + phosphate + H(+). Its pathway is lipid metabolism; fatty acid biosynthesis. It functions in the pathway lipid metabolism; mycolic acid biosynthesis. In terms of biological role, component of a biotin-dependent acyl-CoA carboxylase complex. This subunit catalyzes the ATP-dependent carboxylation of the biotin carried by the biotin carboxyl carrier (BCC) domain, resulting in the formation of carboxyl biotin. The chain is Biotin-dependent acyl-coenzyme A carboxylase alpha3 subunit (bccA) from Mycobacterium leprae (strain TN).